The chain runs to 818 residues: Probable beta-glucosidase I (818 aa).

N176 carries N-linked (GlcNAc...) asparagine glycosylation. The active site involves D204. The region spanning 374–534 is the PA14 domain; it reads DGKPGFTFRV…SQEELISNAV (161 aa). N-linked (GlcNAc...) asparagine glycosylation is found at N453 and N472.

It belongs to the glycosyl hydrolase 3 family.

The protein localises to the secreted. It carries out the reaction Hydrolysis of terminal, non-reducing beta-D-glucosyl residues with release of beta-D-glucose.. Its pathway is glycan metabolism; cellulose degradation. In terms of biological role, beta-glucosidases are one of a number of cellulolytic enzymes involved in the degradation of cellulosic biomass. Catalyzes the last step releasing glucose from the inhibitory cellobiose. The chain is Probable beta-glucosidase I (bglI) from Aspergillus niger (strain ATCC MYA-4892 / CBS 513.88 / FGSC A1513).